The sequence spans 196 residues: MKIVTVEFVKSATLPSGYPPGSLPEVAFVGRSNVGKSSLINTLLRRKQLARTSNTPGRTQLINFFNVNQELLFVDLPGYGFARVPEAVKREWGPMIETYLRDRECLRMVVFILDIRRDPSQEDLALKGWLDYYGRRTLFVLTKSDKLSRGESKRRQRSVQESLALPEMPLIFSAKTGLGRERILEEIRKAKGEARS.

Residues 22 to 193 form the EngB-type G domain; that stretch reads SLPEVAFVGR…LEEIRKAKGE (172 aa). GTP-binding positions include 30-37, 57-61, 75-78, 142-145, and 172-174; these read GRSNVGKS, GRTQL, DLPG, TKSD, and FSA. 2 residues coordinate Mg(2+): Ser37 and Thr59.

Belongs to the TRAFAC class TrmE-Era-EngA-EngB-Septin-like GTPase superfamily. EngB GTPase family. Requires Mg(2+) as cofactor.

Its function is as follows. Necessary for normal cell division and for the maintenance of normal septation. The chain is Probable GTP-binding protein EngB from Syntrophus aciditrophicus (strain SB).